The following is a 341-amino-acid chain: Anthranilate phosphoribosyltransferase (341 aa).

Residues Gly82, 85-86 (GD), Thr90, 92-95 (NIST), 110-118 (KHGGRSVSS), and Ser122 each bind 5-phospho-alpha-D-ribose 1-diphosphate. Gly82 serves as a coordination point for anthranilate. Ser94 is a Mg(2+) binding site. Arg168 provides a ligand contact to anthranilate. Mg(2+) contacts are provided by Asp227 and Glu228.

The protein belongs to the anthranilate phosphoribosyltransferase family. As to quaternary structure, homodimer. The cofactor is Mg(2+).

The enzyme catalyses N-(5-phospho-beta-D-ribosyl)anthranilate + diphosphate = 5-phospho-alpha-D-ribose 1-diphosphate + anthranilate. It participates in amino-acid biosynthesis; L-tryptophan biosynthesis; L-tryptophan from chorismate: step 2/5. Its function is as follows. Catalyzes the transfer of the phosphoribosyl group of 5-phosphorylribose-1-pyrophosphate (PRPP) to anthranilate to yield N-(5'-phosphoribosyl)-anthranilate (PRA). In Nitrosomonas eutropha (strain DSM 101675 / C91 / Nm57), this protein is Anthranilate phosphoribosyltransferase.